The following is a 236-amino-acid chain: 2-C-methyl-D-erythritol 4-phosphate cytidylyltransferase (236 aa).

This sequence belongs to the IspD/TarI cytidylyltransferase family. IspD subfamily.

The enzyme catalyses 2-C-methyl-D-erythritol 4-phosphate + CTP + H(+) = 4-CDP-2-C-methyl-D-erythritol + diphosphate. It functions in the pathway isoprenoid biosynthesis; isopentenyl diphosphate biosynthesis via DXP pathway; isopentenyl diphosphate from 1-deoxy-D-xylulose 5-phosphate: step 2/6. Catalyzes the formation of 4-diphosphocytidyl-2-C-methyl-D-erythritol from CTP and 2-C-methyl-D-erythritol 4-phosphate (MEP). This is 2-C-methyl-D-erythritol 4-phosphate cytidylyltransferase from Paraburkholderia phymatum (strain DSM 17167 / CIP 108236 / LMG 21445 / STM815) (Burkholderia phymatum).